A 388-amino-acid chain; its full sequence is Succinate--CoA ligase [ADP-forming] subunit beta (388 aa).

An ATP-grasp domain is found at 9–244 (KEIFRSMGVA…LEEEDPKEIE (236 aa)). Residues lysine 46, 53–55 (GRG), glutamate 99, cysteine 102, and glutamate 107 each bind ATP. Residues asparagine 199 and aspartate 213 each coordinate Mg(2+). Residues asparagine 264 and 321 to 323 (GIM) each bind substrate.

The protein belongs to the succinate/malate CoA ligase beta subunit family. Heterotetramer of two alpha and two beta subunits. Mg(2+) serves as cofactor.

It catalyses the reaction succinate + ATP + CoA = succinyl-CoA + ADP + phosphate. The enzyme catalyses GTP + succinate + CoA = succinyl-CoA + GDP + phosphate. It functions in the pathway carbohydrate metabolism; tricarboxylic acid cycle; succinate from succinyl-CoA (ligase route): step 1/1. Succinyl-CoA synthetase functions in the citric acid cycle (TCA), coupling the hydrolysis of succinyl-CoA to the synthesis of either ATP or GTP and thus represents the only step of substrate-level phosphorylation in the TCA. The beta subunit provides nucleotide specificity of the enzyme and binds the substrate succinate, while the binding sites for coenzyme A and phosphate are found in the alpha subunit. The chain is Succinate--CoA ligase [ADP-forming] subunit beta from Staphylococcus aureus (strain Mu3 / ATCC 700698).